The chain runs to 133 residues: Major seminal plasma glycoprotein PSP-I (133 aa).

An N-terminal signal peptide occupies residues 1 to 24; it reads MKLGSAIPWALLFSTATLISTGWG. C30 and C51 are oxidised to a cystine. In terms of domain architecture, CUB spans 30 to 130; it reads CGGRLTDDYG…SPYEIIFLRD (101 aa). An N-linked (GlcNAc...) (complex) asparagine glycan is attached at N71. C74 and C95 are joined by a disulfide.

As to quaternary structure, monomer or heterodimer with PSP-II (depending on the type of glycosylation of PSP-I). In terms of tissue distribution, seminal plasma or sperm.

The protein resides in the secreted. Not yet identified, major porcine seminal plasma protein. Can bind soybean trypsin inhibitor after deglycosylation. The protein is Major seminal plasma glycoprotein PSP-I of Sus scrofa (Pig).